A 181-amino-acid polypeptide reads, in one-letter code: ATP-dependent protease subunit HslV (181 aa).

The active site involves T9. Positions 166, 169, and 172 each coordinate Na(+).

This sequence belongs to the peptidase T1B family. HslV subfamily. A double ring-shaped homohexamer of HslV is capped on each side by a ring-shaped HslU homohexamer. The assembly of the HslU/HslV complex is dependent on binding of ATP.

The protein resides in the cytoplasm. It catalyses the reaction ATP-dependent cleavage of peptide bonds with broad specificity.. With respect to regulation, allosterically activated by HslU binding. Its function is as follows. Protease subunit of a proteasome-like degradation complex believed to be a general protein degrading machinery. In Staphylococcus haemolyticus (strain JCSC1435), this protein is ATP-dependent protease subunit HslV.